The sequence spans 354 residues: Uroporphyrinogen decarboxylase (354 aa).

Substrate-binding positions include 30–34, Asp79, Tyr154, Ser209, and His333; that span reads RQAGR.

Belongs to the uroporphyrinogen decarboxylase family. As to quaternary structure, homodimer.

Its subcellular location is the cytoplasm. The catalysed reaction is uroporphyrinogen III + 4 H(+) = coproporphyrinogen III + 4 CO2. Its pathway is porphyrin-containing compound metabolism; protoporphyrin-IX biosynthesis; coproporphyrinogen-III from 5-aminolevulinate: step 4/4. Catalyzes the decarboxylation of four acetate groups of uroporphyrinogen-III to yield coproporphyrinogen-III. This chain is Uroporphyrinogen decarboxylase, found in Mycobacterium sp. (strain JLS).